Here is a 166-residue protein sequence, read N- to C-terminus: MEMLKFGKFAALALAMAVAVGCSSKGGDNAGEGAAVDPNAGYGANTGAVDGSLSEEAALRAITTFYFEYDSSDLKPEAMRALDVHAKDLKANGNRVVLEGNTDERGTREYNMALGERRAKAVQRYLVLQGVSPAQLELVSYGEERPVATGNDEQSWAQNRRVELRK.

A signal peptide spans 1–21 (MEMLKFGKFAALALAMAVAVG). Cysteine 22 carries the N-palmitoyl cysteine lipid modification. A lipid anchor (S-diacylglycerol cysteine) is attached at cysteine 22. The 113-residue stretch at 54–166 (SEEAALRAIT…AQNRRVELRK (113 aa)) folds into the OmpA-like domain. The disordered stretch occupies residues 147–166 (VATGNDEQSWAQNRRVELRK).

It belongs to the Pal lipoprotein family. The Tol-Pal system is composed of five core proteins: the inner membrane proteins TolA, TolQ and TolR, the periplasmic protein TolB and the outer membrane protein Pal. They form a network linking the inner and outer membranes and the peptidoglycan layer.

The protein localises to the cell outer membrane. Part of the Tol-Pal system, which plays a role in outer membrane invagination during cell division and is important for maintaining outer membrane integrity. This Pseudomonas putida (Arthrobacter siderocapsulatus) protein is Peptidoglycan-associated lipoprotein.